Consider the following 370-residue polypeptide: tRNA-specific 2-thiouridylase MnmA (370 aa).

Residues 24–31 (AMSGGVDS) and L50 contribute to the ATP site. The active-site Nucleophile is C118. A disulfide bond links C118 and C214. G142 contacts ATP. Positions 164–166 (KDQ) are interaction with tRNA. The active-site Cysteine persulfide intermediate is the C214.

Belongs to the MnmA/TRMU family.

Its subcellular location is the cytoplasm. The enzyme catalyses S-sulfanyl-L-cysteinyl-[protein] + uridine(34) in tRNA + AH2 + ATP = 2-thiouridine(34) in tRNA + L-cysteinyl-[protein] + A + AMP + diphosphate + H(+). Its function is as follows. Catalyzes the 2-thiolation of uridine at the wobble position (U34) of tRNA, leading to the formation of s(2)U34. The protein is tRNA-specific 2-thiouridylase MnmA of Ehrlichia ruminantium (strain Gardel).